The sequence spans 350 residues: Aldo-keto reductase 1B (350 aa).

The Proton donor role is filled by Tyr-84. A substrate-binding site is contributed by His-146. Residue Ser-244–Asn-306 participates in NADP(+) binding.

Belongs to the aldo/keto reductase family.

The protein localises to the cytoplasm. It catalyses the reaction an alditol + NADP(+) = an aldose + NADPH + H(+). The catalysed reaction is all-trans-retinol + NADP(+) = all-trans-retinal + NADPH + H(+). The enzyme catalyses 9-cis-retinol + NADP(+) = 9-cis-retinal + NADPH + H(+). It carries out the reaction 13-cis-retinol + NADP(+) = 13-cis-retinal + NADPH + H(+). It catalyses the reaction glycerol + NADP(+) = D-glyceraldehyde + NADPH + H(+). The catalysed reaction is glycerol + NADP(+) = L-glyceraldehyde + NADPH + H(+). The enzyme catalyses prenol + NADP(+) = 3-methyl-2-butenal + NADPH + H(+). It carries out the reaction (E)-hex-2-en-1-ol + NADP(+) = (E)-hex-2-enal + NADPH + H(+). It catalyses the reaction (E,E)-2,4-hexadien-1-ol + NADP(+) = (E,E)-2,4-hexadienal + NADPH + H(+). The catalysed reaction is a 4-hydroxynonen-1-ol + NADP(+) = a 4-hydroxynonenal + NADPH + H(+). The enzyme catalyses prostaglandin F2alpha + NADP(+) = prostaglandin H2 + NADPH + H(+). It carries out the reaction allyl alcohol + NADP(+) = acrolein + NADPH + H(+). It catalyses the reaction pyridine 3-methanol + NADP(+) = pyridine-3-carbaldehyde + NADPH + H(+). The catalysed reaction is 1-hexadecanoyl-2-(5-oxopentanoyl)-sn-glycero-3-phosphocholine + NADPH + H(+) = 1-hexadecanoyl-2-(5-hydroxypentanoyl)-sn-glycero-3-phosphocholine + NADP(+). The enzyme catalyses 1-hexadecanoyl-2-(7-oxoheptanoyl)-sn-glycero-3-phosphocholine + NADPH + H(+) = 1-hexadecanoyl-2-(7-hydroxyheptanoyl)-sn-glycero-3-phosphocholine + NADP(+). It carries out the reaction 1-hexadecanoyl-2-(9-oxononanoyl)-sn-glycero-3-phosphocholine + NADPH + H(+) = 1-hexadecanoyl-2-(9-hydroxynonanoyl)-sn-glycero-3-phosphocholine + NADP(+). It catalyses the reaction 1-hexadecanoyl-2-(5-oxopentanoyl)-sn-glycero-3-phosphoethanolamine + NADPH + H(+) = 1-hexadecanoyl-2-(5-hydroxypentanoyl)-sn-glycero-3-phosphoethanolamine + NADP(+). In terms of biological role, catalyzes the NADPH-dependent reduction of a wide variety of carbonyl-containing compounds to their corresponding alcohols. Displays enzymatic activity towards endogenous metabolites such as aromatic and aliphatic aldehydes, ketones, monosaccharides, bile acids and xenobiotics substrates. Key enzyme in the polyol pathway, catalyzes reduction of glucose to sorbitol during hyperglycemia. Reduces steroids and their derivatives and prostaglandins. Through production of prostaglandin F2alpha may regulate the activity of non-muscle myosin II in an autocrine or paracrine fashion; influences border cell and nurse cell stiffness to facilitate border cell cluster migration. Also regulates the cell surface localization of integrins in an autocrine or paracrine fashion; influences border cell adhesion to maintain border cell cluster morphology. In hemocytes, probably contributes to production of sugar alcohols in the hemolymph, which act as alarmins involved in gut-fat body innate immunological communication (GFIC); leads to activation of the imd/Relish signaling pathway in the fat body. The chain is Aldo-keto reductase 1B from Drosophila melanogaster (Fruit fly).